Reading from the N-terminus, the 357-residue chain is Heat-inducible transcription repressor HrcA (357 aa).

This sequence belongs to the HrcA family.

Its function is as follows. Negative regulator of class I heat shock genes (grpE-dnaK-dnaJ and groELS operons). Prevents heat-shock induction of these operons. The polypeptide is Heat-inducible transcription repressor HrcA (Chlorobium phaeovibrioides (strain DSM 265 / 1930) (Prosthecochloris vibrioformis (strain DSM 265))).